Here is a 513-residue protein sequence, read N- to C-terminus: Mesoderm induction early response protein 1 (513 aa).

The span at 1 to 16 (MAEPSVESSSPGGSAT) shows a compositional bias: low complexity. The interval 1–174 (MAEPSVESSS…EEESEEDEDY (174 aa)) is disordered. 2 stretches are compositionally biased toward basic and acidic residues: residues 17 to 36 (SDDH…FDDE) and 46 to 63 (EGER…RESD). Residues 82–107 (QEDDDDEDEEEEEEEGEDDDDVDNDD) are compositionally biased toward acidic residues. Residues 131–146 (QSSNDDPAPSVASQDP) show a composition bias toward polar residues. The tract at residues 157-261 (YFDTNSEIEE…IKDNEQALYE (105 aa)) is interaction with HDAC1. Over residues 162–174 (SEIEEESEEDEDY) the composition is skewed to acidic residues. In terms of domain architecture, ELM2 spans 182 to 280 (KEIMVGSMFQ…ESLRRLRFNV (99 aa)). One can recognise an SANT domain in the interval 285 to 337 (EELSVWTEEECRNFEQGLKVYGKDFHVIQANKVRTRSVGECVAFYYMWKKSER). Residues 368–513 (ESESAASSRA…KLEELETLDD (146 aa)) form a disordered region. Basic and acidic residues-rich tracts occupy residues 416-425 (PSKDEAKPEG) and 463-476 (SRSE…NERP). Over residues 483–500 (NSNGKESPGSSEFFQEAN) the composition is skewed to polar residues.

The protein localises to the nucleus. Its function is as follows. Transcriptional repressor regulating the expression of a number of genes. Probably functions through recruitment of histone deacetylases involved in chromatin silencing. The polypeptide is Mesoderm induction early response protein 1 (MIER1) (Gallus gallus (Chicken)).